We begin with the raw amino-acid sequence, 861 residues long: E3 ubiquitin-protein ligase HECTD3 (861 aa).

The residue at position 2 (A2) is an N-acetylalanine. S12 is modified (phosphoserine). Positions 219 to 397 constitute a DOC domain; it reads DEDLIHFLYD…TSLVRYPRLE (179 aa). In terms of domain architecture, HECT spans 512 to 857; it reads YEKPLDYRWP…NCVAIDTDMS (346 aa). The active-site Glycyl thioester intermediate is the C823.

As to quaternary structure, interacts with TRIOBP. Interacts with STX8.

It is found in the cytoplasm. The protein resides in the perinuclear region. The enzyme catalyses S-ubiquitinyl-[E2 ubiquitin-conjugating enzyme]-L-cysteine + [acceptor protein]-L-lysine = [E2 ubiquitin-conjugating enzyme]-L-cysteine + N(6)-ubiquitinyl-[acceptor protein]-L-lysine.. It functions in the pathway protein modification; protein ubiquitination. In terms of biological role, E3 ubiquitin ligases accepts ubiquitin from an E2 ubiquitin-conjugating enzyme in the form of a thioester and then directly transfers the ubiquitin to targeted substrates. Mediates ubiquitination of TRIOBP and its subsequent proteasomal degradation, thus facilitating cell cycle progression by regulating the turn-over of TRIOBP. Mediates also ubiquitination of STX8. This chain is E3 ubiquitin-protein ligase HECTD3 (HECTD3), found in Homo sapiens (Human).